The primary structure comprises 206 residues: Ribosomal RNA small subunit methyltransferase G (206 aa).

S-adenosyl-L-methionine-binding positions include glycine 71, phenylalanine 76, 125-126, and arginine 139; that span reads IE.

It belongs to the methyltransferase superfamily. RNA methyltransferase RsmG family.

Its subcellular location is the cytoplasm. It catalyses the reaction guanosine(527) in 16S rRNA + S-adenosyl-L-methionine = N(7)-methylguanosine(527) in 16S rRNA + S-adenosyl-L-homocysteine. Specifically methylates the N7 position of guanine in position 527 of 16S rRNA. This Cereibacter sphaeroides (strain ATCC 17023 / DSM 158 / JCM 6121 / CCUG 31486 / LMG 2827 / NBRC 12203 / NCIMB 8253 / ATH 2.4.1.) (Rhodobacter sphaeroides) protein is Ribosomal RNA small subunit methyltransferase G.